The following is a 234-amino-acid chain: Phosphoglycolate phosphatase (234 aa).

The Nucleophile role is filled by D13. Positions 13, 15, and 175 each coordinate Mg(2+).

It belongs to the HAD-like hydrolase superfamily. CbbY/CbbZ/Gph/YieH family. In terms of assembly, monomer. The cofactor is Mg(2+). Chloride serves as cofactor.

The enzyme catalyses 2-phosphoglycolate + H2O = glycolate + phosphate. The protein operates within organic acid metabolism; glycolate biosynthesis; glycolate from 2-phosphoglycolate: step 1/1. Its function is as follows. Specifically catalyzes the dephosphorylation of 2-phosphoglycolate. Is involved in the dissimilation of the intracellular 2-phosphoglycolate formed during the DNA repair of 3'-phosphoglycolate ends, a major class of DNA lesions induced by oxidative stress. The polypeptide is Phosphoglycolate phosphatase (Pectobacterium atrosepticum (strain SCRI 1043 / ATCC BAA-672) (Erwinia carotovora subsp. atroseptica)).